Reading from the N-terminus, the 526-residue chain is Microphthalmia-associated transcription factor (526 aa).

Residues 20–54 (EPKTYYELKSQPLKSSSSAEHSGASKPPLSSSTMT) are disordered. Residues 34 to 44 (SSSSAEHSGAS) show a composition bias toward low complexity. Residue Ser-180 is modified to Phosphoserine; by MAPK. Lys-289 participates in a covalent cross-link: Glycyl lysine isopeptide (Lys-Gly) (interchain with G-Cter in SUMO). In terms of domain architecture, bHLH spans 311–364 (QKKDNHNLIERRRRFNINDRIKELGTLIPKSNDPDMRWNKGTILKASVDYIRKL). The stretch at 355 to 401 (KASVDYIRKLQREQQRAKDLENRQKKLEHANRHLLLRVQELEMQARA) forms a coiled coil. Residues 374–395 (LENRQKKLEHANRHLLLRVQEL) form a leucine-zipper region. At Ser-405 the chain carries Phosphoserine; by GSK3. Ser-414 is modified (phosphoserine). Lys-423 is covalently cross-linked (Glycyl lysine isopeptide (Lys-Gly) (interchain with G-Cter in SUMO)). Ser-491 is subject to Phosphoserine. The tract at residues 496–526 (TDPLLSSVSPGASKTSSRRSSMSAEETEHAC) is disordered. Over residues 507 to 519 (ASKTSSRRSSMSA) the composition is skewed to low complexity. Ser-516 bears the Phosphoserine; by RPS6KA1 mark.

The protein belongs to the MiT/TFE family. In terms of assembly, homodimer or heterodimer; dimerization is mediated via the coiled coil region. Efficient DNA binding requires dimerization with another bHLH protein. Binds DNA in the form of homodimer or heterodimer with either TFE3, TFEB or TFEC. Identified in a complex with HINT1 and CTNNB1. Interacts with KARS1. Interacts with VSX2. Phosphorylation at Ser-405 significantly enhances the ability to bind the tyrosinase promoter. Phosphorylated at Ser-180 and Ser-516 following KIT signaling, triggering a short live activation: Phosphorylation at Ser-180 and Ser-516 by MAPK and RPS6KA1, respectively, activate the transcription factor activity but also promote ubiquitination and subsequent degradation by the proteasome. Phosphorylated in response to blue light (415nm). In terms of processing, ubiquitinated following phosphorylation at Ser-180, leading to subsequent degradation by the proteasome. Deubiquitinated by USP13, preventing its degradation.

The protein localises to the nucleus. Its subcellular location is the cytoplasm. Its function is as follows. Transcription factor that regulates the expression of genes with essential roles in cell differentiation, proliferation and survival. Binds to M-boxes (5'-TCATGTG-3') and symmetrical DNA sequences (E-boxes) (5'-CACGTG-3') found in the promoters of target genes, such as BCL2 and tyrosinase (TYR). Plays an important role in melanocyte development by regulating the expression of tyrosinase (TYR) and tyrosinase-related protein 1 (TYRP1). Plays a critical role in the differentiation of various cell types, such as neural crest-derived melanocytes, mast cells, osteoclasts and optic cup-derived retinal pigment epithelium. The polypeptide is Microphthalmia-associated transcription factor (Mitf) (Rattus norvegicus (Rat)).